A 198-amino-acid polypeptide reads, in one-letter code: Hookworm platelet inhibitor 1 (198 aa).

An N-terminal signal peptide occupies residues 1 to 17 (MSSYLLVLVAILGFAYA). Disulfide bonds link Cys24–Cys65, Cys78–Cys146, Cys141–Cys154, Cys174–Cys186, and Cys177–Cys195.

This sequence belongs to the CRISP family. As to quaternary structure, monomer. In terms of tissue distribution, detected in cephalic glands.

The protein resides in the secreted. Its function is as follows. Hookworms inhibitor of platelet aggregation and adhesion. Native protein inhibits platelet aggregation induced by ADP, epinephrine, and thrombin. In addition, it prevents adhesion of resting platelets to immobilized fibrinogen and collagen. May act by binding to glycoprotein IIb/IIIa (ITGA2B/ITGB3) and integrin alpha-2/beta-1 (ITGA1/ITGB1), respectively. It is noteworthy that the recombinant protein fails to inhibit binding to fibrinogen (through ITGA2B/ITGB3) and collagen (through ITGA1/ITGB1). In Ancylostoma caninum (Dog hookworm), this protein is Hookworm platelet inhibitor 1.